A 273-amino-acid polypeptide reads, in one-letter code: SPRY domain-containing SOCS box protein 1 (273 aa).

At Tyr31 the chain carries Phosphotyrosine. The B30.2/SPRY domain occupies 33 to 231; that stretch reads KPTRLDLLLD…IRMRYLNGLD (199 aa). One can recognise an SOCS box domain in the interval 232–273; the sequence is PEPLPLMDLCRRSVRLALGKGRLGEIHALPLPASLKAYLLYQ.

This sequence belongs to the SPSB family. As to quaternary structure, component of the probable ECS(SPSB1) E3 ubiquitin-protein ligase complex which contains CUL5, RNF7/RBX2, Elongin BC complex and SPSB1. Interacts with CUL5, RNF7, ELOB and ELOC. Directly interacts with MET tyrosine kinase domain in the presence and in the absence of HGF, however HGF treatment has a positive effect on this interaction. When phosphorylated, interacts with RASA1 without affecting its stability. Interacts (via B30.2/SPRY domain) with PAWR; this interaction is direct and occurs in association with the Elongin BC complex. Interacts with NOS2 and EPHB2.

The protein localises to the cytoplasm. It is found in the cytosol. It participates in protein modification; protein ubiquitination. Its function is as follows. Substrate recognition component of a SCF-like ECS (Elongin BC-CUL2/5-SOCS-box protein) E3 ubiquitin-protein ligase complex which mediates the ubiquitination and subsequent proteasomal degradation of target proteins. Negatively regulates nitric oxide (NO) production and limits cellular toxicity in activated macrophages by mediating the ubiquitination and proteasomal degradation of NOS2. Acts as a bridge which links NOS2 with the ECS E3 ubiquitin ligase complex components ELOC and CUL5. The chain is SPRY domain-containing SOCS box protein 1 (SPSB1) from Bos taurus (Bovine).